A 979-amino-acid polypeptide reads, in one-letter code: Ubiquitin carboxyl-terminal hydrolase 37 (979 aa).

Residues 32–34 (KEN) carry the KEN box 1 motif. 2 consecutive short sequence motifs (D-box) follow at residues 71 to 79 (RLMLTLQDN) and 96 to 105 (RLFLDAVHQN). The disordered stretch occupies residues 110–153 (AMKPSQGSGSFGAILGSRTSQKETSRQLSYSDNQASAKRGSLET). Ser114 bears the Phosphoserine mark. Over residues 135–145 (RQLSYSDNQAS) the composition is skewed to polar residues. The short motif at 160–168 (RKVLGNPGR) is the D-box 3 element. Ser170 is modified (phosphoserine). A compositionally biased stretch (low complexity) spans 183-198 (IPSLTSTSTPLRSGLL). Positions 183 to 304 (IPSLTSTSTP…TPSAKRSLGF (122 aa)) are disordered. The residue at position 210 (Ser210) is a Phosphoserine. Residues 221 to 223 (KEN) carry the KEN box 2 motif. Residues 243–257 (SREKQLSLKQSEENR) are compositionally biased toward basic and acidic residues. The span at 281-298 (SGGTNLDRTNVSSQTPSA) shows a compositional bias: polar residues. The 611-residue stretch at 341–951 (QGFSNLGNTC…SGYIFFYMHK (611 aa)) folds into the USP domain. Cys350 serves as the catalytic Nucleophile. Ser628 bears the Phosphoserine; by CDK2 mark. Ser650 and Ser652 each carry phosphoserine. Disordered regions lie at residues 673 to 701 (EQQQ…SGFD) and 719 to 795 (DASP…GEVD). 2 stretches are compositionally biased toward basic and acidic residues: residues 681–695 (KDSK…KSEL) and 719–732 (DASP…DDKP). The UIM 1 domain occupies 704–723 (SEEELLAAVLEISKRDASPS). The residue at position 770 (Ser770) is a Phosphoserine. A compositionally biased stretch (basic and acidic residues) spans 774-786 (ITKDCDENKENKT). Residues 782 to 784 (KEN) carry the KEN box 3 motif. UIM domains follow at residues 806-825 (REEQ…QEAW) and 828-847 (KEDD…FNNS). Catalysis depends on His906, which acts as the Proton acceptor.

It belongs to the peptidase C19 family. Interacts with FZR1/CDH1. Interacts with CDT1. Polyubiquitinated via 'Lys-11'-linked ubiquitin by the APC(CDH1) complex during late mitosis, leading to its degradation. Able to mediate auto-deubiquitination. Post-translationally, phosphorylated at Ser-628 by CDK2 during G1/S phase but not during mitosis; phosphorylation at Ser-628 is required for deubiquitinase activity. Also polyubiquitinated during early G1 phase, without leading to degradation. Phosphorylated at Ser-114 by ATM following DNA damage, which in turn increases its deubiquitination activity towards BLM. Expressed in brain and prostate.

The protein resides in the nucleus. The protein localises to the chromosome. It carries out the reaction Thiol-dependent hydrolysis of ester, thioester, amide, peptide and isopeptide bonds formed by the C-terminal Gly of ubiquitin (a 76-residue protein attached to proteins as an intracellular targeting signal).. Its function is as follows. Deubiquitinase that plays a role in different processes including cell cycle regulation, DNA replication or DNA damage response. Antagonizes the anaphase-promoting complex (APC/C) during G1/S transition by mediating deubiquitination of cyclin-A (CCNA1 and CCNA2), thereby promoting S phase entry. Specifically mediates deubiquitination of 'Lys-11'-linked polyubiquitin chains, a specific ubiquitin-linkage type mediated by the APC/C complex. Phosphorylation at Ser-628 during G1/S phase maximizes the deubiquitinase activity, leading to prevent degradation of cyclin-A (CCNA1 and CCNA2). Plays an important role in the regulation of DNA replication by stabilizing the licensing factor CDT1. Also plays an essential role beyond S-phase entry to promote the efficiency and fidelity of replication by deubiquitinating checkpoint kinase 1/CHK1, promoting its stability. Sustains the DNA damage response (DDR) by deubiquitinating and stabilizing the ATP-dependent DNA helicase BLM. Mechanistically, DNA double-strand breaks (DSB) promotes ATM-mediated phosphorylation of USP37 and enhances the binding between USP37 and BLM. Promotes cell migration by deubiquitinating and stabilizing the epithelial-mesenchymal transition (EMT)-inducing transcription factor SNAI. Plays a role in the regulation of mitotic spindle assembly and mitotic progression by associating with chromatin-associated WAPL and stabilizing it through deubiquitination. The sequence is that of Ubiquitin carboxyl-terminal hydrolase 37 (USP37) from Homo sapiens (Human).